We begin with the raw amino-acid sequence, 187 residues long: Adenylate kinase (187 aa).

Gly-10–Thr-15 is an ATP binding site. The NMP stretch occupies residues Ser-30–Val-59. AMP is bound by residues Thr-31, Arg-36, Asp-57–Val-59, Gly-85–Arg-88, and Gln-92. The tract at residues Gly-126–Asp-136 is LID. Arg-127 is a binding site for ATP. AMP is bound by residues Arg-133 and Arg-144. Gly-172 is an ATP binding site.

It belongs to the adenylate kinase family. In terms of assembly, monomer.

It localises to the cytoplasm. The catalysed reaction is AMP + ATP = 2 ADP. Its pathway is purine metabolism; AMP biosynthesis via salvage pathway; AMP from ADP: step 1/1. In terms of biological role, catalyzes the reversible transfer of the terminal phosphate group between ATP and AMP. Plays an important role in cellular energy homeostasis and in adenine nucleotide metabolism. In Xanthomonas oryzae pv. oryzae (strain MAFF 311018), this protein is Adenylate kinase.